The following is a 343-amino-acid chain: Dihydroorotase (343 aa).

The Zn(2+) site is built by His-13 and His-15. Substrate is bound by residues His-15–Arg-17 and Asn-41. 3 residues coordinate Zn(2+): Lys-99, His-136, and His-174. Position 99 is an N6-carboxylysine (Lys-99). Position 136 (His-136) interacts with substrate. Position 219 (Leu-219) interacts with substrate. A Zn(2+)-binding site is contributed by Asp-247. Asp-247 is an active-site residue. Substrate contacts are provided by His-251 and Ala-263.

Belongs to the metallo-dependent hydrolases superfamily. DHOase family. Class II DHOase subfamily. As to quaternary structure, homodimer. The cofactor is Zn(2+).

The catalysed reaction is (S)-dihydroorotate + H2O = N-carbamoyl-L-aspartate + H(+). The protein operates within pyrimidine metabolism; UMP biosynthesis via de novo pathway; (S)-dihydroorotate from bicarbonate: step 3/3. In terms of biological role, catalyzes the reversible cyclization of carbamoyl aspartate to dihydroorotate. The protein is Dihydroorotase of Shewanella putrefaciens (strain CN-32 / ATCC BAA-453).